We begin with the raw amino-acid sequence, 152 residues long: Superoxide dismutase [Cu-Zn] 2 (152 aa).

N-linked (GlcNAc...) asparagine glycosylation is found at asparagine 9 and asparagine 33. Cu cation-binding residues include histidine 45, histidine 47, and histidine 62. A disulfide bridge connects residues cysteine 56 and cysteine 145. Positions 62, 70, 79, and 82 each coordinate Zn(2+). Asparagine 85 carries N-linked (GlcNAc...) asparagine glycosylation. Residue histidine 119 participates in Cu cation binding.

It belongs to the Cu-Zn superoxide dismutase family. Cu cation is required as a cofactor. It depends on Zn(2+) as a cofactor. As to expression, expressed in fruits, leaves and pollen grains.

The protein localises to the cytoplasm. It localises to the endoplasmic reticulum. The catalysed reaction is 2 superoxide + 2 H(+) = H2O2 + O2. Inhibited by KCN and H(2)O(2). Functionally, destroys radicals which are normally produced within the cells and which are toxic to biological systems. Probably involved in the protection against oxidative stress during pollen development. This chain is Superoxide dismutase [Cu-Zn] 2 (OLE5), found in Olea europaea (Common olive).